Here is an 880-residue protein sequence, read N- to C-terminus: DNA gyrase subunit A (880 aa).

A Topo IIA-type catalytic domain is found at 35–530 (LPDVRDGLKP…ASGDIDLEDL (496 aa)). The active-site O-(5'-phospho-DNA)-tyrosine intermediate is tyrosine 123. The GyrA-box motif lies at 557–563 (QRRGGKG).

Belongs to the type II topoisomerase GyrA/ParC subunit family. In terms of assembly, heterotetramer, composed of two GyrA and two GyrB chains. In the heterotetramer, GyrA contains the active site tyrosine that forms a transient covalent intermediate with DNA, while GyrB binds cofactors and catalyzes ATP hydrolysis.

The protein resides in the cytoplasm. The enzyme catalyses ATP-dependent breakage, passage and rejoining of double-stranded DNA.. Its function is as follows. A type II topoisomerase that negatively supercoils closed circular double-stranded (ds) DNA in an ATP-dependent manner to modulate DNA topology and maintain chromosomes in an underwound state. Negative supercoiling favors strand separation, and DNA replication, transcription, recombination and repair, all of which involve strand separation. Also able to catalyze the interconversion of other topological isomers of dsDNA rings, including catenanes and knotted rings. Type II topoisomerases break and join 2 DNA strands simultaneously in an ATP-dependent manner. In Haemophilus influenzae (strain ATCC 51907 / DSM 11121 / KW20 / Rd), this protein is DNA gyrase subunit A.